The following is a 487-amino-acid chain: MKVFVLGWLLKINLMKTLYSQRRFYHVETPFNTNVGVGGRDIESTGFAWWSGNARLINVSGKLLGAHVAHAGIMVFWTGAMTLFEVAHFVPEKPLYEQGLILIPHLATLGWGVGPGGEIFNTYPYFVVGVVHLISSAVLGFGGLYHSLIGPDTLEESFPFFGYDWRDKNKMTTILGIHLVLLGIGAFLLVIKSLFVGGVYDTWAPGGGDVRFVSNPTLNPLVIFGYVLKSPFGGDGWIVSVNNMEDLIGGHVWIGIICIAGGIWHILTKPFAWARRAFVWSGEAYLSYSLGALSIMGLTASNFVWYNNTAYPSEFYGPTGPEASQAQAFTFLVRDQRLGANVASSQGPTGLGKYLMRSPSGEIIFGGETMRFWDLRAPWVEPLRGPNGLDLNKIKNDIQPWQERRAAEYMTHAPLGSLNSVGGVATEINSVNYVSPRSWLTTSHFFLGFFLFIGHLWHAGRARAAAAGFEKGINRENEPVLSMRPLD.

The propeptide occupies 1-28 (MKVFVLGWLLKINLMKTLYSQRRFYHVE). Transmembrane regions (helical) follow at residues 83–107 (LFEV…PHLA), 148–169 (LIGP…RDKN), 192–214 (KSLF…RFVS), 269–289 (KPFA…LSYS), and 305–326 (WYNN…ASQA). Residue Glu381 participates in [CaMn4O5] cluster binding. A helical membrane pass occupies residues 461–485 (RARAAAAGFEKGINRENEPVLSMRP).

It belongs to the PsbB/PsbC family. PsbC subfamily. PSII is composed of 1 copy each of membrane proteins PsbA, PsbB, PsbC, PsbD, PsbE, PsbF, PsbH, PsbI, PsbJ, PsbK, PsbL, PsbM, PsbT, PsbX, PsbY, PsbZ, Psb30/Ycf12, at least 3 peripheral proteins of the oxygen-evolving complex and a large number of cofactors. It forms dimeric complexes. Binds multiple chlorophylls and provides some of the ligands for the Ca-4Mn-5O cluster of the oxygen-evolving complex. It may also provide a ligand for a Cl- that is required for oxygen evolution. PSII binds additional chlorophylls, carotenoids and specific lipids. serves as cofactor.

The protein localises to the plastid. Its subcellular location is the chloroplast thylakoid membrane. Its function is as follows. One of the components of the core complex of photosystem II (PSII). It binds chlorophyll and helps catalyze the primary light-induced photochemical processes of PSII. PSII is a light-driven water:plastoquinone oxidoreductase, using light energy to abstract electrons from H(2)O, generating O(2) and a proton gradient subsequently used for ATP formation. In Porphyra purpurea (Red seaweed), this protein is Photosystem II CP43 reaction center protein.